Consider the following 212-residue polypeptide: 3-oxo-tetronate 4-phosphate decarboxylase (212 aa).

Glutamate 79 serves as the catalytic Proton acceptor. Zn(2+) is bound by residues glutamate 79, histidine 98, and histidine 100. Tyrosine 125 functions as the Proton donor in the catalytic mechanism. Histidine 165 is a binding site for Zn(2+).

The protein belongs to the aldolase class II family. AraD/FucA subfamily. Requires Zn(2+) as cofactor.

The enzyme catalyses 3-dehydro-4-O-phospho-D-erythronate + H(+) = dihydroxyacetone phosphate + CO2. It catalyses the reaction 3-dehydro-4-O-phospho-L-erythronate + H(+) = dihydroxyacetone phosphate + CO2. In terms of biological role, catalyzes the decarboxylation of 3-oxo-tetronate 4-phosphate to dihydroxyacetone phosphate (DHAP) and CO(2). This is 3-oxo-tetronate 4-phosphate decarboxylase from Escherichia coli O6:H1 (strain CFT073 / ATCC 700928 / UPEC).